We begin with the raw amino-acid sequence, 332 residues long: Tetraacyldisaccharide 4'-kinase (332 aa).

55–62 serves as a coordination point for ATP; the sequence is GVGGSGKT.

The protein belongs to the LpxK family.

It catalyses the reaction a lipid A disaccharide + ATP = a lipid IVA + ADP + H(+). It functions in the pathway glycolipid biosynthesis; lipid IV(A) biosynthesis; lipid IV(A) from (3R)-3-hydroxytetradecanoyl-[acyl-carrier-protein] and UDP-N-acetyl-alpha-D-glucosamine: step 6/6. In terms of biological role, transfers the gamma-phosphate of ATP to the 4'-position of a tetraacyldisaccharide 1-phosphate intermediate (termed DS-1-P) to form tetraacyldisaccharide 1,4'-bis-phosphate (lipid IVA). The sequence is that of Tetraacyldisaccharide 4'-kinase from Acidithiobacillus ferrooxidans (strain ATCC 53993 / BNL-5-31) (Leptospirillum ferrooxidans (ATCC 53993)).